The following is a 111-amino-acid chain: Pyrimidine/purine nucleoside phosphorylase 1 (111 aa).

The protein belongs to the nucleoside phosphorylase PpnP family.

The catalysed reaction is a purine D-ribonucleoside + phosphate = a purine nucleobase + alpha-D-ribose 1-phosphate. It carries out the reaction adenosine + phosphate = alpha-D-ribose 1-phosphate + adenine. It catalyses the reaction cytidine + phosphate = cytosine + alpha-D-ribose 1-phosphate. The enzyme catalyses guanosine + phosphate = alpha-D-ribose 1-phosphate + guanine. The catalysed reaction is inosine + phosphate = alpha-D-ribose 1-phosphate + hypoxanthine. It carries out the reaction thymidine + phosphate = 2-deoxy-alpha-D-ribose 1-phosphate + thymine. It catalyses the reaction uridine + phosphate = alpha-D-ribose 1-phosphate + uracil. The enzyme catalyses xanthosine + phosphate = alpha-D-ribose 1-phosphate + xanthine. In terms of biological role, catalyzes the phosphorolysis of diverse nucleosides, yielding D-ribose 1-phosphate and the respective free bases. Can use uridine, adenosine, guanosine, cytidine, thymidine, inosine and xanthosine as substrates. Also catalyzes the reverse reactions. The polypeptide is Pyrimidine/purine nucleoside phosphorylase 1 (Psychrobacter cryohalolentis (strain ATCC BAA-1226 / DSM 17306 / VKM B-2378 / K5)).